The sequence spans 211 residues: Large ribosomal subunit protein uL3 (211 aa).

The segment at 122 to 147 is disordered; that stretch reads AIKRHGQSRGPMAHGSRYHRRPGSMG.

The protein belongs to the universal ribosomal protein uL3 family. Part of the 50S ribosomal subunit. Forms a cluster with proteins L14 and L19.

Functionally, one of the primary rRNA binding proteins, it binds directly near the 3'-end of the 23S rRNA, where it nucleates assembly of the 50S subunit. The chain is Large ribosomal subunit protein uL3 from Geobacillus sp. (strain WCH70).